Consider the following 239-residue polypeptide: Purine nucleoside phosphorylase DeoD-type (239 aa).

An a purine D-ribonucleoside-binding site is contributed by H5. Residues G21, R25, R44, and 88–91 each bind phosphate; that span reads RVGS. A purine D-ribonucleoside contacts are provided by residues 180-182 and 204-205; these read EME and SD. D205 acts as the Proton donor in catalysis.

The protein belongs to the PNP/UDP phosphorylase family. As to quaternary structure, homohexamer; trimer of homodimers.

It catalyses the reaction a purine D-ribonucleoside + phosphate = a purine nucleobase + alpha-D-ribose 1-phosphate. The catalysed reaction is a purine 2'-deoxy-D-ribonucleoside + phosphate = a purine nucleobase + 2-deoxy-alpha-D-ribose 1-phosphate. Functionally, catalyzes the reversible phosphorolytic breakdown of the N-glycosidic bond in the beta-(deoxy)ribonucleoside molecules, with the formation of the corresponding free purine bases and pentose-1-phosphate. This is Purine nucleoside phosphorylase DeoD-type from Salmonella gallinarum (strain 287/91 / NCTC 13346).